A 106-amino-acid polypeptide reads, in one-letter code: HIG1 domain family member 2A (106 aa).

Ala2 bears the N-acetylalanine mark. An HIG1 domain is found at 20-106 (VIEGFSPTVY…LAASAMKSQA (87 aa)). A run of 2 helical transmembrane segments spans residues 47–67 (PMVP…LYCF) and 83–103 (IAAQ…SAMK).

In terms of assembly, associates with cytochrome c oxidase (COX, complex IV); proposed complex component.

It is found in the mitochondrion membrane. It localises to the mitochondrion inner membrane. Proposed subunit of cytochrome c oxidase (COX, complex IV), which is the terminal component of the mitochondrial respiratory chain that catalyzes the reduction of oxygen to water. May be involved in cytochrome c oxidase activity. May play a role in the assembly of respiratory supercomplexes. This is HIG1 domain family member 2A (Higd2a) from Mus musculus (Mouse).